The primary structure comprises 708 residues: Polyribonucleotide nucleotidyltransferase (708 aa).

The Mg(2+) site is built by aspartate 488 and aspartate 494. In terms of domain architecture, KH spans 555–614 (PRIYTMKIPQKKIAEVIGKGGATIRQLTEETGTTIEIGDDGTIKIAATDGESAANAISRI). The S1 motif domain occupies 624 to 692 (GTIYEGKVVR…RQGRVRLSIK (69 aa)).

Belongs to the polyribonucleotide nucleotidyltransferase family. As to quaternary structure, component of the RNA degradosome, which is a multiprotein complex involved in RNA processing and mRNA degradation. Requires Mg(2+) as cofactor.

Its subcellular location is the cytoplasm. The catalysed reaction is RNA(n+1) + phosphate = RNA(n) + a ribonucleoside 5'-diphosphate. Functionally, involved in mRNA degradation. Catalyzes the phosphorolysis of single-stranded polyribonucleotides processively in the 3'- to 5'-direction. The protein is Polyribonucleotide nucleotidyltransferase of Pseudoalteromonas translucida (strain TAC 125).